Here is a 416-residue protein sequence, read N- to C-terminus: MTESGPLENMLAQMEQAREYVDIDDGIYERLKSPERTLSVSLPVRMDDGSVEVFDAYRCQFDSARGPYKGGIRYHPTVSEEEVSALAGWMTWKTALVDLPFGGAKGGIVCNPKELSDNEIEQLTRRYTEGIRRMIGPETDIPAPDMNTDPRTMAWVMDTYSVYQGYAVPEVVTGKPPEIGGTDGRVEATGRGVSIITEETFEYFDTDIQDADVAIQGFGNVGSVTADLLSERGANIVAVSDVTGAIHDPTGLDIADVQAYADANGGRLEGYDAEPISNDDLLTLDVDALIPAAIEDVITVDVAERLAADVIVEAANGPTTFDAAQVLSDRGVPVVPDILANAGGVIVSYLEWVQNSQQYSWDVEEVNRDLRQRLTGAFDEMLVAYEDRNIPTLRTAAYTIALERSADAHEFRGLFP.

Lys105 is a catalytic residue.

Belongs to the Glu/Leu/Phe/Val dehydrogenases family. In terms of assembly, homohexamer.

This is Glutamate dehydrogenase A2 (gdhA2) from Halobacterium salinarum (strain ATCC 700922 / JCM 11081 / NRC-1) (Halobacterium halobium).